The sequence spans 354 residues: Uroporphyrinogen decarboxylase (354 aa).

Residues 27 to 31, D77, Y154, T209, and H327 each bind substrate; that span reads RQAGR.

This sequence belongs to the uroporphyrinogen decarboxylase family. Homodimer.

It is found in the cytoplasm. It catalyses the reaction uroporphyrinogen III + 4 H(+) = coproporphyrinogen III + 4 CO2. It functions in the pathway porphyrin-containing compound metabolism; protoporphyrin-IX biosynthesis; coproporphyrinogen-III from 5-aminolevulinate: step 4/4. Its function is as follows. Catalyzes the decarboxylation of four acetate groups of uroporphyrinogen-III to yield coproporphyrinogen-III. The sequence is that of Uroporphyrinogen decarboxylase from Histophilus somni (strain 129Pt) (Haemophilus somnus).